We begin with the raw amino-acid sequence, 465 residues long: ATP synthase subunit beta (465 aa).

ATP is bound at residue 152-159 (GGAGVGKT).

This sequence belongs to the ATPase alpha/beta chains family. In terms of assembly, F-type ATPases have 2 components, CF(1) - the catalytic core - and CF(0) - the membrane proton channel. CF(1) has five subunits: alpha(3), beta(3), gamma(1), delta(1), epsilon(1). CF(0) has three main subunits: a(1), b(2) and c(9-12). The alpha and beta chains form an alternating ring which encloses part of the gamma chain. CF(1) is attached to CF(0) by a central stalk formed by the gamma and epsilon chains, while a peripheral stalk is formed by the delta and b chains.

It localises to the cell inner membrane. It catalyses the reaction ATP + H2O + 4 H(+)(in) = ADP + phosphate + 5 H(+)(out). Functionally, produces ATP from ADP in the presence of a proton gradient across the membrane. The catalytic sites are hosted primarily by the beta subunits. The sequence is that of ATP synthase subunit beta from Campylobacter fetus subsp. fetus (strain 82-40).